The chain runs to 109 residues: MSAQPVDLQIFGRSLRVNCPPEQRDALSQAADDLNQRLQDLKERTRVTNTEQLVFIAALNISYELTQEKAKTRDYAASMEQRIKMLQQTIEQALLDQGRTPERPGQKFE.

Residues 21–97 (PEQRDALSQA…QTIEQALLDQ (77 aa)) are a coiled coil.

It belongs to the ZapA family. Type 1 subfamily. Homodimer. Interacts with FtsZ.

It is found in the cytoplasm. In terms of biological role, activator of cell division through the inhibition of FtsZ GTPase activity, therefore promoting FtsZ assembly into bundles of protofilaments necessary for the formation of the division Z ring. It is recruited early at mid-cell but it is not essential for cell division. The protein is Cell division protein ZapA of Enterobacter sp. (strain 638).